A 609-amino-acid chain; its full sequence is PTS system beta-glucoside-specific EIIBCA component (609 aa).

A PTS EIIB type-1 domain is found at 1–86 (MDYDKLSKDI…VRHSNLSDEK (86 aa)). C26 serves as the catalytic Phosphocysteine intermediate; for EIIB activity. The PTS EIIC type-1 domain occupies 103–459 (DVISGVFTPI…GSQQPAVHEG (357 aa)). A run of 10 helical transmembrane segments spans residues 112–132 (ILPAIAGAGMIKGLVALAVTF), 141–161 (VHVILTAVGDGAFYFLPLLLA), 174–194 (VAAAIAAAILHPDLTALLGAG), 202–222 (LPVTAATYSSTVIPILLSIWI), 246–266 (FTLLIVVPLTLITVGPLGAIL), 281–301 (AGLVAMILLAGTFSLIIMTGM), 321–341 (LLPAMFLANMGQAGASFAVFL), 351–371 (LALTTSITALMGITEPAMYGV), 379–399 (FAAALIGGAAGGAFYGMTGVA), and 412–432 (IPVFIGPTFIYAMIGLVIAFA). Residues 480–584 (DGVFSAGVMG…DVITPVIVTN (105 aa)) enclose the PTS EIIA type-1 domain. The active-site Tele-phosphohistidine intermediate; for EIIA activity is H532.

It is found in the cell membrane. In terms of biological role, the phosphoenolpyruvate-dependent sugar phosphotransferase system (sugar PTS), a major carbohydrate active -transport system, catalyzes the phosphorylation of incoming sugar substrates concomitantly with their translocation across the cell membrane. This system is involved in beta-glucoside transport. The sequence is that of PTS system beta-glucoside-specific EIIBCA component (bglP) from Bacillus subtilis (strain 168).